We begin with the raw amino-acid sequence, 304 residues long: Type II restriction enzyme LlaDCHI (304 aa).

Belongs to the DpnII type II restriction endonuclease family.

The enzyme catalyses Endonucleolytic cleavage of DNA to give specific double-stranded fragments with terminal 5'-phosphates.. Its function is as follows. A P subtype restriction enzyme that recognizes the double-stranded unmethylated sequence 5'-GATC-3' and cleaves before G-1. The protein is Type II restriction enzyme LlaDCHI (llaDCHIR) of Lactococcus lactis subsp. cremoris (Streptococcus cremoris).